Consider the following 220-residue polypeptide: 7-cyano-7-deazaguanine synthase (220 aa).

11-21 (VSGGMDSVTLM) is an ATP binding site. Zn(2+) contacts are provided by Cys-186, Cys-194, Cys-197, and Cys-200.

Belongs to the QueC family. It depends on Zn(2+) as a cofactor.

It carries out the reaction 7-carboxy-7-deazaguanine + NH4(+) + ATP = 7-cyano-7-deazaguanine + ADP + phosphate + H2O + H(+). It functions in the pathway purine metabolism; 7-cyano-7-deazaguanine biosynthesis. Functionally, catalyzes the ATP-dependent conversion of 7-carboxy-7-deazaguanine (CDG) to 7-cyano-7-deazaguanine (preQ(0)). In Porphyromonas gingivalis (strain ATCC BAA-308 / W83), this protein is 7-cyano-7-deazaguanine synthase.